A 119-amino-acid chain; its full sequence is NAD(P)H-quinone oxidoreductase subunit M (119 aa).

It belongs to the complex I NdhM subunit family. NDH-1 can be composed of about 15 different subunits; different subcomplexes with different compositions have been identified which probably have different functions.

The protein localises to the cellular thylakoid membrane. The catalysed reaction is a plastoquinone + NADH + (n+1) H(+)(in) = a plastoquinol + NAD(+) + n H(+)(out). It catalyses the reaction a plastoquinone + NADPH + (n+1) H(+)(in) = a plastoquinol + NADP(+) + n H(+)(out). Its function is as follows. NDH-1 shuttles electrons from an unknown electron donor, via FMN and iron-sulfur (Fe-S) centers, to quinones in the respiratory and/or the photosynthetic chain. The immediate electron acceptor for the enzyme in this species is believed to be plastoquinone. Couples the redox reaction to proton translocation, and thus conserves the redox energy in a proton gradient. Cyanobacterial NDH-1 also plays a role in inorganic carbon-concentration. This is NAD(P)H-quinone oxidoreductase subunit M from Picosynechococcus sp. (strain ATCC 27264 / PCC 7002 / PR-6) (Agmenellum quadruplicatum).